Consider the following 357-residue polypeptide: Membrane-bound lytic murein transglycosylase C (357 aa).

An N-terminal signal peptide occupies residues Met-1 to Ala-15. Cys-16 is lipidated: N-palmitoyl cysteine. A lipid anchor (S-diacylglycerol cysteine) is attached at Cys-16.

The protein belongs to the transglycosylase Slt family.

It localises to the cell outer membrane. The catalysed reaction is Exolytic cleavage of the (1-&gt;4)-beta-glycosidic linkage between N-acetylmuramic acid (MurNAc) and N-acetylglucosamine (GlcNAc) residues in peptidoglycan, from either the reducing or the non-reducing ends of the peptidoglycan chains, with concomitant formation of a 1,6-anhydrobond in the MurNAc residue.. Murein-degrading enzyme. May play a role in recycling of muropeptides during cell elongation and/or cell division. The protein is Membrane-bound lytic murein transglycosylase C of Haemophilus influenzae (strain 86-028NP).